A 582-amino-acid polypeptide reads, in one-letter code: Hemagglutinin-neuraminidase (582 aa).

Residues 1–34 lie on the Intravirion side of the membrane; that stretch reads MEPSKLFTMSDNATFAPGPVINAADKKTFRTCFR. Residues 35-55 traverse the membrane as a helical; Signal-anchor for type II membrane protein segment; that stretch reads ILVLSVQAVTLILVIVTLGEL. At 56-582 the chain is on the virion surface side; sequence VRMINDQGLS…LPVLTRLTIT (527 aa). Residue asparagine 127 is glycosylated (N-linked (GlcNAc...) asparagine; by host). 3 cysteine pairs are disulfide-bonded: cysteine 178-cysteine 202, cysteine 192-cysteine 253, and cysteine 244-cysteine 257. Residues 240-245 form an involved in neuraminidase activity region; it reads NRKSCS. N-linked (GlcNAc...) asparagine; by host glycans are attached at residues asparagine 284 and asparagine 329. Intrachain disulfides connect cysteine 350-cysteine 471, cysteine 382-cysteine 392, and cysteine 465-cysteine 475. N-linked (GlcNAc...) asparagine; by host glycosylation is found at asparagine 400, asparagine 448, and asparagine 464. Asparagine 507 carries N-linked (GlcNAc...) asparagine; by host glycosylation. Cysteines 545 and 556 form a disulfide.

It belongs to the paramyxoviruses hemagglutinin-neuraminidase family. In terms of assembly, homotetramer; composed of disulfide-linked homodimers. Interacts with F protein trimer.

The protein localises to the virion membrane. It is found in the host cell membrane. The enzyme catalyses Hydrolysis of alpha-(2-&gt;3)-, alpha-(2-&gt;6)-, alpha-(2-&gt;8)- glycosidic linkages of terminal sialic acid residues in oligosaccharides, glycoproteins, glycolipids, colominic acid and synthetic substrates.. Attaches the virus to alpha-2,3-linked sialic acid-containing cell receptors and thereby initiating infection. Binding of HN protein to the receptor induces a conformational change that allows the F protein to trigger virion/cell membranes fusion. Binds to the glycan motifs sialyl Lewis (SLe) and GM2 ganglioside (GM2-glycan). Functionally, neuraminidase (sialidase) activity ensures the efficient spread of the virus by dissociating the mature virions from the neuraminic acid containing glycoproteins. The polypeptide is Hemagglutinin-neuraminidase (HN) (Mumps virus genotype B (strain Miyahara vaccine) (MuV)).